The chain runs to 561 residues: Delta(24)-sterol reductase (561 aa).

Over Met-1–Arg-25 the chain is Lumenal. Ser-2 is subject to Phosphoserine. A helical; Signal-anchor membrane pass occupies residues Trp-26–Leu-46. The Cytoplasmic segment spans residues Gly-47–Asp-561. The FAD-binding PCMH-type domain maps to Met-49–Val-232. Positions Cys-518–Arg-539 are interaction with calmodulin.

Belongs to the DIMINUTO family. In terms of assembly, interacts with calmodulin.

The protein localises to the microsome membrane. It carries out the reaction lathosterol + NADP(+) = 5alpha-cholesta-7,24-dien-3beta-ol + NADPH + H(+). In terms of biological role, plays a critical role in the general process of plant cell elongation. Involved in the synthesis of campesterol, an early precursor of brassinolide. Required for the conversion of 24-methylenecholesterol to campesterol and for the conversion of isofucosterol to sitosterol. Necessary for both the isomerization and reduction of 24-methylenecholesterol. Regulates indirectly phytochrome-mediated light responses through the modulation of brassinosteroid biosynthesis. The polypeptide is Delta(24)-sterol reductase (DIM) (Arabidopsis thaliana (Mouse-ear cress)).